The chain runs to 746 residues: Long-chain-alcohol oxidase FAO3 (746 aa).

A helical transmembrane segment spans residues isoleucine 139 to phenylalanine 159. Cysteine 233–alanine 248 lines the FAD pocket. The Proton acceptor role is filled by histidine 677.

Belongs to the GMC oxidoreductase family.

Its subcellular location is the membrane. It carries out the reaction a long-chain primary fatty alcohol + O2 = a long-chain fatty aldehyde + H2O2. Long-chain fatty alcohol oxidase involved in the omega-oxidation pathway of lipid degradation. This Arabidopsis thaliana (Mouse-ear cress) protein is Long-chain-alcohol oxidase FAO3 (FAO3).